The primary structure comprises 404 residues: Protein ORF23 (404 aa).

This sequence belongs to the lymphocryptovirus BTRF1 family. In terms of assembly, interacts with ORF34.

The protein localises to the host nucleus. Its subcellular location is the host cytoplasm. Its function is as follows. Plays a role in the expression of late genes. This Homo sapiens (Human) protein is Protein ORF23 (ORF23).